Here is a 418-residue protein sequence, read N- to C-terminus: Mitochondrial outer membrane protein SLC25A46 (418 aa).

Phosphoserine is present on residues serine 32 and serine 35. Residue threonine 45 is modified to Phosphothreonine. Positions 46-96 are disordered; that stretch reads PPDIPGSRNLHWGEKSPSYGVPSAPPTLEGSAEEPFPGGGEGPRPGPSSEQ. One copy of the Solcar 1 repeat lies at 96–187; that stretch reads QLNRFAGFGI…GIISEFTPLP (92 aa). 6 helical membrane passes run 103 to 123, 167 to 187, 202 to 222, 258 to 278, 314 to 334, and 382 to 402; these read FGIG…CIVL, FIVQ…TPLP, HLLL…ASLI, LLPL…HYII, FPEL…LYPL, and VFGF…HATI. The stretch at 311-413 is one Solcar 2 repeat; sequence DAYFPELIAN…QITKMIYSTL (103 aa).

Belongs to the mitochondrial carrier (TC 2.A.29) family. As to quaternary structure, associates with the mitochondrial contact site and cristae organizing system (MICOS) complex. May associate with the endoplasmic reticulum membrane protein complex (EMC).

The protein localises to the mitochondrion outer membrane. Functionally, transmembrane protein of the mitochondrial outer membrane that controls mitochondrial organization. May regulate the assembly of the MICOS (mitochondrial contact site and cristae organizing system) complex which is essential to the biogenesis and dynamics of mitochondrial cristae, the inwards folds of the inner mitochondrial membrane. Through its interaction with the EMC (endoplasmic reticulum membrane protein complex), could regulate mitochondrial lipid homeostasis and thereby mitochondrial fission. This Mus musculus (Mouse) protein is Mitochondrial outer membrane protein SLC25A46.